Consider the following 398-residue polypeptide: Phosphoglycerate kinase (398 aa).

Substrate is bound by residues 21 to 23 (DFN), R36, 59 to 62 (HLGR), R119, and R157. ATP is bound by residues K208, G296, E327, and 354–357 (GGDS).

The protein belongs to the phosphoglycerate kinase family. Monomer.

It is found in the cytoplasm. It catalyses the reaction (2R)-3-phosphoglycerate + ATP = (2R)-3-phospho-glyceroyl phosphate + ADP. It functions in the pathway carbohydrate degradation; glycolysis; pyruvate from D-glyceraldehyde 3-phosphate: step 2/5. The polypeptide is Phosphoglycerate kinase (Streptococcus sanguinis (strain SK36)).